Reading from the N-terminus, the 451-residue chain is Multidrug export protein MepA (451 aa).

12 helical membrane passes run 26–46 (MIGT…IGFL), 54–74 (AISL…LFGV), 97–117 (SFSI…TLPF), 139–159 (LKVM…EQFA), 170–190 (IGML…IFGF), 194–214 (VVGA…FFII), 245–265 (IPAF…NLFL), 282–302 (LVQF…PLIA), 318–338 (AVIM…FTIG), 355–375 (ATFI…GFLF), 397–417 (AIII…GVIW), and 418–438 (SLLI…YLLR).

This sequence belongs to the multi antimicrobial extrusion (MATE) (TC 2.A.66.1) family. MepA subfamily.

It localises to the cell membrane. Functionally, multidrug resistance efflux protein. Contributes to resistance to the glycylcycline antibiotic tigecycline. In Staphylococcus aureus (strain N315), this protein is Multidrug export protein MepA (mepA).